Reading from the N-terminus, the 275-residue chain is MSGLVLERIFEEAEGEGRGALIGYLTCGHPGLEETVSLARALRDGGVDILELGVPFSEPIADGPTIQKAVDEALRAGTTPWDCLEVAEEVSEFVPVVLLCYYNTLHANGFERYLSAAAEAGVSGIIVADMPVEESDEVHSVARDLEIDVIYLVAPSTTDERLKKIGERASGFVYVISRYGVTGARRDLSEDTLELVRWVRDHVDVPVAVGFGISERWHVEEVIAAGADGAIVGSAFIKEIHRSEDIAEAEERVRELAKELVEGARDGYRRRSSSE.

Residues Glu51 and Asp62 each act as proton acceptor in the active site.

Belongs to the TrpA family. In terms of assembly, tetramer of two alpha and two beta chains.

It carries out the reaction (1S,2R)-1-C-(indol-3-yl)glycerol 3-phosphate + L-serine = D-glyceraldehyde 3-phosphate + L-tryptophan + H2O. It participates in amino-acid biosynthesis; L-tryptophan biosynthesis; L-tryptophan from chorismate: step 5/5. Its function is as follows. The alpha subunit is responsible for the aldol cleavage of indoleglycerol phosphate to indole and glyceraldehyde 3-phosphate. In Methanopyrus kandleri (strain AV19 / DSM 6324 / JCM 9639 / NBRC 100938), this protein is Tryptophan synthase alpha chain.